Reading from the N-terminus, the 201-residue chain is NADH-ubiquinone oxidoreductase chain 6 (201 aa).

5 helical membrane-spanning segments follow: residues 4-24 (LVLF…VISV), 28-48 (VFSV…LLLL), 55-75 (LLFL…VVMI), 88-108 (FYYA…IFII), and 151-171 (LFIL…ILTL).

Belongs to the complex I subunit 6 family.

The protein localises to the mitochondrion membrane. The catalysed reaction is a ubiquinone + NADH + 5 H(+)(in) = a ubiquinol + NAD(+) + 4 H(+)(out). Its function is as follows. Core subunit of the mitochondrial membrane respiratory chain NADH dehydrogenase (Complex I) that is believed to belong to the minimal assembly required for catalysis. Complex I functions in the transfer of electrons from NADH to the respiratory chain. The immediate electron acceptor for the enzyme is believed to be ubiquinone. This Cyanidium caldarium (Red alga) protein is NADH-ubiquinone oxidoreductase chain 6 (ND6).